The chain runs to 683 residues: Synaptic vesicle glycoprotein 2B (683 aa).

Over residues 1–10 the composition is skewed to basic and acidic residues; that stretch reads MDDYRYRDNY. The segment at 1–73 is disordered; that stretch reads MDDYRYRDNY…TKMAPSRADG (73 aa). Topologically, residues 1–110 are cytoplasmic; the sequence is MDDYRYRDNY…ECGHGRFQWT (110 aa). The residue at position 33 (Ser33) is a Phosphoserine. At Thr36 the chain carries Phosphothreonine. The chain crosses the membrane as a helical span at residues 111-131; that stretch reads LFFVLGLALMADGVEIFVVSF. Topologically, residues 132–148 are extracellular; it reads ALPSAEKDMCLSSSKKG. A helical membrane pass occupies residues 149-169; the sequence is MLGLIVYLGMMAGAFILGGLA. Residues 170 to 182 lie on the Cytoplasmic side of the membrane; the sequence is DKLGRKKVLSMSL. Residues 183–203 traverse the membrane as a helical segment; it reads AINASFASLSSFVQGYGAFLF. The Extracellular portion of the chain corresponds to 204-205; that stretch reads CR. Residues 206-226 form a helical membrane-spanning segment; sequence LISGIGIGGSLPIVFAYFSEF. Residues 227 to 237 lie on the Cytoplasmic side of the membrane; that stretch reads LSREKRGEHLS. The helical transmembrane segment at 238–258 threads the bilayer; sequence WLGIFWMTGGIYASAMAWSII. The Extracellular segment spans residues 259 to 277; the sequence is PHYGWGFSMGTNYHFHSWR. The chain crosses the membrane as a helical span at residues 278-298; it reads VFVIVCALPATVSMVALKFMP. The Cytoplasmic segment spans residues 299-390; the sequence is ESPRFLLEMG…CVMGPYRMNT (92 aa). The helical transmembrane segment at 391–411 threads the bilayer; it reads LILAVVWFTMALSYYGLTVWF. Over 412-535 the chain is Extracellular; it reads PDMIRYFQDE…CHMDFEEDND (124 aa). The residue at position 423 (Tyr423) is a Phosphotyrosine. 3 N-linked (GlcNAc...) asparagine glycosylation sites follow: Asn441, Asn491, and Asn516. Residues 536–556 form a helical membrane-spanning segment; sequence FLIYLVSFLGSLSVLPGNIIS. At 557–565 the chain is on the cytoplasmic side; the sequence is ALLMDRIGR. A helical transmembrane segment spans residues 566-586; sequence LKMIGGSMLISAVCCFFLFFG. The Extracellular portion of the chain corresponds to 587 to 592; it reads NSESAM. Residues 593 to 613 form a helical membrane-spanning segment; that stretch reads IGWQCLFCGTSIAAWNALDVI. Residues 614–626 are Cytoplasmic-facing; the sequence is TVELYPTNQRATA. The helical transmembrane segment at 627–649 threads the bilayer; it reads FGILNGLCKFGAILGNTIFASFV. Residues 650-653 are Extracellular-facing; that stretch reads GITK. The helical transmembrane segment at 654–672 threads the bilayer; it reads VVPILLAAASLVGGGLIAL. Topologically, residues 673-683 are cytoplasmic; the sequence is RLPETREQVLM.

The protein belongs to the major facilitator superfamily. Interacts with SYT1 in a calcium-independent manner. Forms a complex with SYT1, syntaxin-1 and SNAP25. In terms of assembly, (Microbial infection) Interacts with C.botulinum neurotoxin type A (BoNT/A, botA). As to quaternary structure, (Microbial infection) Interacts with C.botulinum neurotoxin type D (BoNT/D, botD). No evidence for its interaction with BoNT/D has also been published. N-glycosylated. Post-translationally, the N-terminal cytoplasmic domain is phosphorylated by CK1. Expressed in ribbon synapses of the retina (at protein level). Expressed in diaphragm motor nerve terminals (at protein level). Expressed in hippocampus neurons (at protein level).

The protein localises to the cytoplasmic vesicle. It is found in the secretory vesicle. It localises to the synaptic vesicle membrane. The protein resides in the acrosome. Functionally, probably plays a role in the control of regulated secretion in neural and endocrine cells. (Microbial infection) Receptor for C.botulinum neurotoxin type A (BoNT/A, botA); the toxin probably binds via extracellular loop 4. In terms of biological role, (Microbial infection) Possible receptor for C.botulinum neurotoxin type D (BoNT/D, botD). Not a receptor for C.botulinum neurotoxin type D (BoNT/D, botD). Its function is as follows. (Microbial infection) Receptor for C.botulinum neurotoxin type E (BoNT/E); the toxin probably binds via extracellular loop 4. It probably requires glycosylation of Asn-516. This Mus musculus (Mouse) protein is Synaptic vesicle glycoprotein 2B (Sv2b).